A 515-amino-acid polypeptide reads, in one-letter code: Maturase K (515 aa).

The protein belongs to the intron maturase 2 family. MatK subfamily.

The protein localises to the plastid. The protein resides in the chloroplast. Functionally, usually encoded in the trnK tRNA gene intron. Probably assists in splicing its own and other chloroplast group II introns. The protein is Maturase K of Pinus patula (Mexican weeping pine).